We begin with the raw amino-acid sequence, 171 residues long: Co-chaperone protein HscB homolog (171 aa).

A J domain is found at 2-74 (NHFELFGLPP…ISRAEYLLSQ (73 aa)).

Belongs to the HscB family. As to quaternary structure, interacts with HscA and stimulates its ATPase activity.

In terms of biological role, co-chaperone involved in the maturation of iron-sulfur cluster-containing proteins. Seems to help targeting proteins to be folded toward HscA. The protein is Co-chaperone protein HscB homolog of Vibrio vulnificus (strain YJ016).